The sequence spans 266 residues: Imidazole glycerol phosphate synthase subunit HisF (266 aa).

Residues D11 and D130 contribute to the active site.

It belongs to the HisA/HisF family. In terms of assembly, heterodimer of HisH and HisF.

The protein localises to the cytoplasm. It carries out the reaction 5-[(5-phospho-1-deoxy-D-ribulos-1-ylimino)methylamino]-1-(5-phospho-beta-D-ribosyl)imidazole-4-carboxamide + L-glutamine = D-erythro-1-(imidazol-4-yl)glycerol 3-phosphate + 5-amino-1-(5-phospho-beta-D-ribosyl)imidazole-4-carboxamide + L-glutamate + H(+). It functions in the pathway amino-acid biosynthesis; L-histidine biosynthesis; L-histidine from 5-phospho-alpha-D-ribose 1-diphosphate: step 5/9. Functionally, IGPS catalyzes the conversion of PRFAR and glutamine to IGP, AICAR and glutamate. The HisF subunit catalyzes the cyclization activity that produces IGP and AICAR from PRFAR using the ammonia provided by the HisH subunit. This Nitrosopumilus maritimus (strain SCM1) protein is Imidazole glycerol phosphate synthase subunit HisF.